We begin with the raw amino-acid sequence, 146 residues long: D-aminoacyl-tRNA deacylase (146 aa).

The Gly-cisPro motif, important for rejection of L-amino acids motif lies at 137–138 (GP).

It belongs to the DTD family. As to quaternary structure, homodimer.

It localises to the cytoplasm. The enzyme catalyses glycyl-tRNA(Ala) + H2O = tRNA(Ala) + glycine + H(+). It catalyses the reaction a D-aminoacyl-tRNA + H2O = a tRNA + a D-alpha-amino acid + H(+). Its function is as follows. An aminoacyl-tRNA editing enzyme that deacylates mischarged D-aminoacyl-tRNAs. Also deacylates mischarged glycyl-tRNA(Ala), protecting cells against glycine mischarging by AlaRS. Acts via tRNA-based rather than protein-based catalysis; rejects L-amino acids rather than detecting D-amino acids in the active site. By recycling D-aminoacyl-tRNA to D-amino acids and free tRNA molecules, this enzyme counteracts the toxicity associated with the formation of D-aminoacyl-tRNA entities in vivo and helps enforce protein L-homochirality. This chain is D-aminoacyl-tRNA deacylase, found in Bacillus cytotoxicus (strain DSM 22905 / CIP 110041 / 391-98 / NVH 391-98).